The primary structure comprises 143 residues: Peptide methionine sulfoxide reductase MsrB (143 aa).

The 123-residue stretch at Asn-5–Lys-127 folds into the MsrB domain. Residue Cys-116 is the Nucleophile of the active site.

Belongs to the MsrB Met sulfoxide reductase family.

It carries out the reaction L-methionyl-[protein] + [thioredoxin]-disulfide + H2O = L-methionyl-(R)-S-oxide-[protein] + [thioredoxin]-dithiol. The polypeptide is Peptide methionine sulfoxide reductase MsrB (Halalkalibacterium halodurans (strain ATCC BAA-125 / DSM 18197 / FERM 7344 / JCM 9153 / C-125) (Bacillus halodurans)).